A 1197-amino-acid chain; its full sequence is Neural cell adhesion molecule L1.1 (1197 aa).

Ig-like C2-type domains lie at 1–58 (EFRQ…TAVS), 69–160 (PSLA…EPMS), 165–263 (PSNS…YTVT), 268–355 (PYWT…THVH), and 360–442 (PAQI…KSIS). The Extracellular portion of the chain corresponds to 1-1054 (EFRQRDPSPS…SPRNFATEGW (1054 aa)). A disulfide bridge connects residues cysteine 92 and cysteine 143. 8 N-linked (GlcNAc...) asparagine glycosylation sites follow: asparagine 135, asparagine 149, asparagine 221, asparagine 298, asparagine 414, asparagine 421, asparagine 438, and asparagine 449. Cystine bridges form between cysteine 199-cysteine 247, cysteine 289-cysteine 339, and cysteine 383-cysteine 432. The Ig-like C2-type 6 domain occupies 451–541 (TKIVGPPQNL…DSDTASGYIT (91 aa)). Cysteine 472 and cysteine 525 form a disulfide bridge. 5 Fibronectin type-III domains span residues 548–643 (PPQS…TPAA), 645–742 (PDTN…SGED), 747–852 (APSA…TPEG), 853–952 (APGP…LLDG), and 953–1048 (EPPS…SPRN). A compositionally biased stretch (polar residues) spans 630-640 (APTESSLSYST). The interval 630–655 (APTESSLSYSTPAAKPDTNPENVMTL) is disordered. A glycan (N-linked (GlcNAc...) asparagine) is linked at asparagine 708. Asparagine 959, asparagine 968, asparagine 1002, and asparagine 1027 each carry an N-linked (GlcNAc...) asparagine glycan. A helical membrane pass occupies residues 1055–1075 (FIGLISALVLLLLVLLLLCYI). At 1076–1197 (KKSKGGKYSV…TSVTGILGPN (122 aa)) the chain is on the cytoplasmic side. Disordered regions lie at residues 1115–1135 (MEKC…SNDS) and 1154–1197 (IGQY…LGPN).

The protein belongs to the immunoglobulin superfamily. L1/neurofascin/NgCAM family. In terms of tissue distribution, expressed in postmitotic neurons in 16-36 hours embryos, including those in the brain, cranial ganglia and otic and olfactory placodes, and in all classes of spinal neurons.

The protein localises to the cell membrane. It localises to the cell projection. The protein resides in the growth cone. Its function is as follows. Cell adhesion molecule with an important role in the development of the nervous system. Involved in neuron-neuron adhesion, neurite fasciculation, outgrowth of neurites, etc. Binds to axonin on neurons. This chain is Neural cell adhesion molecule L1.1 (nadl1.1), found in Danio rerio (Zebrafish).